The sequence spans 286 residues: Shikimate dehydrogenase (NADP(+)) (286 aa).

Shikimate-binding positions include 22 to 24 (SRS) and threonine 71. The active-site Proton acceptor is lysine 75. Glutamate 87 lines the NADP(+) pocket. The shikimate site is built by asparagine 96 and aspartate 111. NADP(+) is bound by residues 136 to 140 (GAGGA), 160 to 165 (NRTAAR), and isoleucine 225. Residue tyrosine 227 coordinates shikimate. Glycine 248 is a binding site for NADP(+).

Belongs to the shikimate dehydrogenase family. Homodimer.

It carries out the reaction shikimate + NADP(+) = 3-dehydroshikimate + NADPH + H(+). It functions in the pathway metabolic intermediate biosynthesis; chorismate biosynthesis; chorismate from D-erythrose 4-phosphate and phosphoenolpyruvate: step 4/7. Involved in the biosynthesis of the chorismate, which leads to the biosynthesis of aromatic amino acids. Catalyzes the reversible NADPH linked reduction of 3-dehydroshikimate (DHSA) to yield shikimate (SA). The protein is Shikimate dehydrogenase (NADP(+)) of Sinorhizobium fredii (strain NBRC 101917 / NGR234).